Reading from the N-terminus, the 108-residue chain is UPF0251 protein PF0620 (108 aa).

Belongs to the UPF0251 family.

This Pyrococcus furiosus (strain ATCC 43587 / DSM 3638 / JCM 8422 / Vc1) protein is UPF0251 protein PF0620.